We begin with the raw amino-acid sequence, 225 residues long: MNSIQFPLLDRTAPNSVISTTLNDLSNWSRLSSLWPLLYGTSCCFIEFASLIGSRFDFDRYGLVPRSSPRQSDLILTAGTVTMKMAPSLVRLYEQMPEPKYVIAMGACTITGGMFSTDSYSTVRGVDKLIPVDVYLPGCPPKPEAVIDAITKLRKKISRELYEDRIRSQRANRCFTTNHKFHVRRSIHTGNYDQRVLYQPPSTSEIPTEIFFKYKNSVSSAELVN.

Cys-43, Cys-44, Cys-108, and Cys-139 together coordinate [4Fe-4S] cluster.

It belongs to the complex I 20 kDa subunit family. In terms of assembly, NDH is composed of at least 16 different subunits, 5 of which are encoded in the nucleus. Requires [4Fe-4S] cluster as cofactor.

The protein localises to the plastid. The protein resides in the chloroplast thylakoid membrane. The enzyme catalyses a plastoquinone + NADH + (n+1) H(+)(in) = a plastoquinol + NAD(+) + n H(+)(out). It carries out the reaction a plastoquinone + NADPH + (n+1) H(+)(in) = a plastoquinol + NADP(+) + n H(+)(out). NDH shuttles electrons from NAD(P)H:plastoquinone, via FMN and iron-sulfur (Fe-S) centers, to quinones in the photosynthetic chain and possibly in a chloroplast respiratory chain. The immediate electron acceptor for the enzyme in this species is believed to be plastoquinone. Couples the redox reaction to proton translocation, and thus conserves the redox energy in a proton gradient. This Solanum bulbocastanum (Wild potato) protein is NAD(P)H-quinone oxidoreductase subunit K, chloroplastic.